We begin with the raw amino-acid sequence, 483 residues long: tRNA-2-methylthio-N(6)-dimethylallyladenosine synthase (483 aa).

The MTTase N-terminal domain occupies K31 to A148. [4Fe-4S] cluster is bound by residues C40, C77, C111, C192, C196, and C199. The Radical SAM core domain maps to R178–E410. The region spanning D413–N477 is the TRAM domain.

This sequence belongs to the methylthiotransferase family. MiaB subfamily. As to quaternary structure, monomer. It depends on [4Fe-4S] cluster as a cofactor.

The protein localises to the cytoplasm. The enzyme catalyses N(6)-dimethylallyladenosine(37) in tRNA + (sulfur carrier)-SH + AH2 + 2 S-adenosyl-L-methionine = 2-methylsulfanyl-N(6)-dimethylallyladenosine(37) in tRNA + (sulfur carrier)-H + 5'-deoxyadenosine + L-methionine + A + S-adenosyl-L-homocysteine + 2 H(+). Catalyzes the methylthiolation of N6-(dimethylallyl)adenosine (i(6)A), leading to the formation of 2-methylthio-N6-(dimethylallyl)adenosine (ms(2)i(6)A) at position 37 in tRNAs that read codons beginning with uridine. The chain is tRNA-2-methylthio-N(6)-dimethylallyladenosine synthase from Acinetobacter baumannii (strain ACICU).